We begin with the raw amino-acid sequence, 1279 residues long: Photoreceptor cilium actin regulator (1279 aa).

G2 carries the N-myristoyl glycine lipid modification. The S-palmitoyl cysteine moiety is linked to residue C3. Disordered regions lie at residues 101–168, 380–598, 802–821, 860–1107, and 1127–1279; these read NKPQ…KGRV, AAQV…SHVE, EVSESEDISGDVEEDLENLP, ASHP…TTAK, and KSSS…KEIS. The span at 126–168 shows a compositional bias: basic and acidic residues; it reads FSGKESKENTPQETSKGNRESVCHQPDSQDHCRQSATESKGRV. Acidic residues predominate over residues 477-491; sequence SEEEDCSPEEEDELS. Composition is skewed to basic and acidic residues over residues 535–547 and 580–598; these read LKMKEAISERIKF and GPERQRRSQSEGCLKSHVE. Positions 804-818 are enriched in acidic residues; sequence SESEDISGDVEEDLE. Polar residues-rich tracts occupy residues 886–901, 913–925, and 955–965; these read GSGSSPRLHSTRSGST, DLNSKQTASPSSE, and TNPTPGQSRTL. A compositionally biased stretch (basic and acidic residues) spans 972–990; sequence FSRDPHSSEASRKGPERSL. Positions 1047 to 1062 are enriched in polar residues; the sequence is RKTTSPPCQHPQSNPA. A compositionally biased stretch (low complexity) spans 1076–1090; the sequence is PSSASCSSPSVSPSR. Basic and acidic residues predominate over residues 1091–1100; the sequence is GSKDSIHSED. Residues 1226–1241 are compositionally biased toward polar residues; the sequence is WNNSRVPELQGSSTKR. The segment covering 1259 to 1279 has biased composition (basic and acidic residues); the sequence is RMNRGQDRPQPESQPQHKEIS.

Specifically expressed in retina.

It localises to the cell projection. The protein resides in the cilium. The protein localises to the photoreceptor outer segment. It is found in the photoreceptor inner segment. Plays an essential role for normal photoreceptor cell maintenance and vision. The chain is Photoreceptor cilium actin regulator from Mus musculus (Mouse).